A 150-amino-acid polypeptide reads, in one-letter code: SsrA-binding protein (150 aa).

A disordered region spans residues 129-150; sequence ETEKQRDWQREKSRIMKGGSKE.

It belongs to the SmpB family.

Its subcellular location is the cytoplasm. Its function is as follows. Required for rescue of stalled ribosomes mediated by trans-translation. Binds to transfer-messenger RNA (tmRNA), required for stable association of tmRNA with ribosomes. tmRNA and SmpB together mimic tRNA shape, replacing the anticodon stem-loop with SmpB. tmRNA is encoded by the ssrA gene; the 2 termini fold to resemble tRNA(Ala) and it encodes a 'tag peptide', a short internal open reading frame. During trans-translation Ala-aminoacylated tmRNA acts like a tRNA, entering the A-site of stalled ribosomes, displacing the stalled mRNA. The ribosome then switches to translate the ORF on the tmRNA; the nascent peptide is terminated with the 'tag peptide' encoded by the tmRNA and targeted for degradation. The ribosome is freed to recommence translation, which seems to be the essential function of trans-translation. The protein is SsrA-binding protein of Cupriavidus pinatubonensis (strain JMP 134 / LMG 1197) (Cupriavidus necator (strain JMP 134)).